Reading from the N-terminus, the 526-residue chain is Adenylyl cyclase-associated protein (526 aa).

The tract at residues 1 to 168 (MPDSKYTMQG…RQSKYFAYLS (168 aa)) is adenyl cyclase-binding. Disordered stretches follow at residues 43–72 (EASKNNKPSDSGADANTTNEPSAENAPEVE), 255–304 (QSTK…DANK), and 326–371 (KVDK…RPPR). The span at 45–64 (SKNNKPSDSGADANTTNEPS) shows a compositional bias: polar residues. The SH3-binding signature appears at 169-369 (ALSEGAPLFS…KPSTLKTKRP (201 aa)). Residues 262 to 274 (ATSSPSPASATAA) are compositionally biased toward low complexity. Positions 275–285 (PAPPPPPPAPP) are enriched in pro residues. Over residues 290–302 (EISNDTPATSSDA) the composition is skewed to polar residues. Over residues 326-338 (KVDKSQQTHKNPE) the composition is skewed to basic and acidic residues. Residues 342 to 352 (SSTVSSTGSKS) are compositionally biased toward low complexity. The interval 354–361 (PPPRPKKP) is interaction with SH3 domain of ABP1. Residues 357 to 370 (RPKKPSTLKTKRPP) show a composition bias toward basic residues. The region spanning 369-504 (PPRKELVGNK…EDDDYVEFPI (136 aa)) is the C-CAP/cofactor C-like domain. Residues 370–526 (PRKELVGNKW…FKSAVFEHAG (157 aa)) form a dimerization and actin-binding region. Ser454 is modified (phosphoserine).

This sequence belongs to the CAP family. As to quaternary structure, homodimer.

It localises to the cytoplasm. Its subcellular location is the cytoskeleton. The protein localises to the actin patch. In terms of biological role, the N-terminal domain binds to adenylyl cyclase, thereby enabling adenylyl cyclase to be activated by upstream regulatory signals, such as Ras. The C-terminal domain is required for normal cellular morphology and growth control. The polypeptide is Adenylyl cyclase-associated protein (SRV2) (Saccharomyces cerevisiae (strain ATCC 204508 / S288c) (Baker's yeast)).